The primary structure comprises 132 residues: MGFLGKKVNGSAPARTTRAAGQAGEDRALAHLTAAGLALVERNYRTPGRGGGEIDLILRERDGTLVFVEVRSRGASAYGGAGGSIGVAKQRRIVFAAQHYLLRWPAPPPCRFDAVLIEGDRLQWLRGAFDAA.

A disordered region spans residues 1–23 (MGFLGKKVNGSAPARTTRAAGQA).

This sequence belongs to the UPF0102 family.

This Acidovorax sp. (strain JS42) protein is UPF0102 protein Ajs_0414.